The following is a 119-amino-acid chain: Holo-[acyl-carrier-protein] synthase (119 aa).

Mg(2+)-binding residues include Asp-8 and Glu-58.

The protein belongs to the P-Pant transferase superfamily. AcpS family. Mg(2+) serves as cofactor.

The protein resides in the cytoplasm. It catalyses the reaction apo-[ACP] + CoA = holo-[ACP] + adenosine 3',5'-bisphosphate + H(+). Transfers the 4'-phosphopantetheine moiety from coenzyme A to a Ser of acyl-carrier-protein. This is Holo-[acyl-carrier-protein] synthase from Bacillus cereus (strain ATCC 14579 / DSM 31 / CCUG 7414 / JCM 2152 / NBRC 15305 / NCIMB 9373 / NCTC 2599 / NRRL B-3711).